Here is a 231-residue protein sequence, read N- to C-terminus: DNA mismatch repair protein MutH (231 aa).

Belongs to the MutH family.

Its subcellular location is the cytoplasm. Sequence-specific endonuclease that cleaves unmethylated GATC sequences. It is involved in DNA mismatch repair. The sequence is that of DNA mismatch repair protein MutH from Shewanella woodyi (strain ATCC 51908 / MS32).